Here is a 259-residue protein sequence, read N- to C-terminus: Ribosomal RNA small subunit methyltransferase A (259 aa).

Positions 15, 17, 41, 62, 86, and 105 each coordinate S-adenosyl-L-methionine.

Belongs to the class I-like SAM-binding methyltransferase superfamily. rRNA adenine N(6)-methyltransferase family. RsmA subfamily.

The protein resides in the cytoplasm. It carries out the reaction adenosine(1518)/adenosine(1519) in 16S rRNA + 4 S-adenosyl-L-methionine = N(6)-dimethyladenosine(1518)/N(6)-dimethyladenosine(1519) in 16S rRNA + 4 S-adenosyl-L-homocysteine + 4 H(+). In terms of biological role, specifically dimethylates two adjacent adenosines (A1518 and A1519) in the loop of a conserved hairpin near the 3'-end of 16S rRNA in the 30S particle. May play a critical role in biogenesis of 30S subunits. This chain is Ribosomal RNA small subunit methyltransferase A, found in Mycoplasmopsis synoviae (strain 53) (Mycoplasma synoviae).